A 459-amino-acid polypeptide reads, in one-letter code: tRNA modification GTPase MnmE (459 aa).

3 residues coordinate (6S)-5-formyl-5,6,7,8-tetrahydrofolate: Arg-21, Glu-84, and Lys-123. The 162-residue stretch at 219-380 (GMLTVIVGQP…LEKEIKQRVY (162 aa)) folds into the TrmE-type G domain. K(+) is bound at residue Asn-229. GTP is bound by residues 229 to 234 (NVGKSS), 248 to 254 (TDIPGTT), and 273 to 276 (DTAG). Ser-233 is a Mg(2+) binding site. K(+) contacts are provided by Thr-248, Ile-250, and Thr-253. Thr-254 is a binding site for Mg(2+). Lys-459 contacts (6S)-5-formyl-5,6,7,8-tetrahydrofolate.

It belongs to the TRAFAC class TrmE-Era-EngA-EngB-Septin-like GTPase superfamily. TrmE GTPase family. In terms of assembly, homodimer. Heterotetramer of two MnmE and two MnmG subunits. K(+) serves as cofactor.

The protein resides in the cytoplasm. In terms of biological role, exhibits a very high intrinsic GTPase hydrolysis rate. Involved in the addition of a carboxymethylaminomethyl (cmnm) group at the wobble position (U34) of certain tRNAs, forming tRNA-cmnm(5)s(2)U34. This Desulfitobacterium hafniense (strain Y51) protein is tRNA modification GTPase MnmE.